The sequence spans 147 residues: Bis(5'-adenosyl)-triphosphatase (147 aa).

Residues 2-109 (SFRFGQHLIK…LPRKAGDFHR (108 aa)) form the HIT domain. Residues His-8, Asn-27, Gln-83, and 89-92 (GQTV) contribute to the substrate site. A Histidine triad motif motif is present at residues 94-98 (HVHVH). His-96 serves as the catalytic Tele-AMP-histidine intermediate. A substrate-binding site is contributed by His-98. Residue Tyr-114 is modified to Phosphotyrosine; by SRC. Tyr-145 is modified (phosphotyrosine).

As to quaternary structure, homodimer. Interacts with UBE2I. Interacts with MDM2. Interacts with CTNNB1. Identified in a complex with CTNNB1 and LEF1. Phosphorylation at Tyr-114 by SRC is required for induction of apoptosis. In terms of tissue distribution, low levels expressed in all tissues tested. Phospho-FHIT observed in liver and kidney, but not in brain and lung. Phospho-FHIT undetected in all tested human tumor cell lines.

It localises to the cytoplasm. Its subcellular location is the mitochondrion. The protein localises to the nucleus. The enzyme catalyses P(1),P(3)-bis(5'-adenosyl) triphosphate + H2O = AMP + ADP + 2 H(+). It carries out the reaction adenosine 5'-phosphosulfate + H2O = sulfate + AMP + 2 H(+). The catalysed reaction is adenosine 5'-phosphosulfate + NH4(+) = adenosine 5'-phosphoramidate + sulfate + 2 H(+). It catalyses the reaction adenosine 5'-phosphoramidate + H2O = AMP + NH4(+). Functionally, possesses dinucleoside triphosphate hydrolase activity. Cleaves P(1)-P(3)-bis(5'-adenosyl) triphosphate (Ap3A) to yield AMP and ADP. Can also hydrolyze P(1)-P(4)-bis(5'-adenosyl) tetraphosphate (Ap4A), but has extremely low activity with ATP. Exhibits adenylylsulfatase activity, hydrolyzing adenosine 5'-phosphosulfate to yield AMP and sulfate. Exhibits adenosine 5'-monophosphoramidase activity, hydrolyzing purine nucleotide phosphoramidates with a single phosphate group such as adenosine 5'monophosphoramidate (AMP-NH2) to yield AMP and NH2. Exhibits adenylylsulfate-ammonia adenylyltransferase, catalyzing the ammonolysis of adenosine 5'-phosphosulfate resulting in the formation of adenosine 5'-phosphoramidate. Also catalyzes the ammonolysis of adenosine 5-phosphorofluoridate and diadenosine triphosphate. Modulates transcriptional activation by CTNNB1 and thereby contributes to regulate the expression of genes essential for cell proliferation and survival, such as CCND1 and BIRC5. Plays a role in the induction of apoptosis via SRC and AKT1 signaling pathways. Inhibits MDM2-mediated proteasomal degradation of p53/TP53 and thereby plays a role in p53/TP53-mediated apoptosis. Induction of apoptosis depends on the ability of FHIT to bind P(1)-P(3)-bis(5'-adenosyl) triphosphate or related compounds, but does not require its catalytic activity, it may in part come from the mitochondrial form, which sensitizes the low-affinity Ca(2+) transporters, enhancing mitochondrial calcium uptake. Functions as a tumor suppressor. The polypeptide is Bis(5'-adenosyl)-triphosphatase (FHIT) (Homo sapiens (Human)).